The sequence spans 919 residues: Phosphoenolpyruvate carboxylase (919 aa).

Residues His138 and Lys579 contribute to the active site.

This sequence belongs to the PEPCase type 1 family. The cofactor is Mg(2+).

It catalyses the reaction oxaloacetate + phosphate = phosphoenolpyruvate + hydrogencarbonate. Functionally, forms oxaloacetate, a four-carbon dicarboxylic acid source for the tricarboxylic acid cycle. This Corynebacterium glutamicum (Brevibacterium saccharolyticum) protein is Phosphoenolpyruvate carboxylase.